The following is a 393-amino-acid chain: UDP-N-acetylglucosamine--N-acetylmuramyl-(pentapeptide) pyrophosphoryl-undecaprenol N-acetylglucosamine transferase (393 aa).

Residues T14–G16, N128, R170, S210, and Q321 each bind UDP-N-acetyl-alpha-D-glucosamine.

It belongs to the glycosyltransferase 28 family. MurG subfamily.

It localises to the cell membrane. The catalysed reaction is di-trans,octa-cis-undecaprenyl diphospho-N-acetyl-alpha-D-muramoyl-L-alanyl-D-glutamyl-meso-2,6-diaminopimeloyl-D-alanyl-D-alanine + UDP-N-acetyl-alpha-D-glucosamine = di-trans,octa-cis-undecaprenyl diphospho-[N-acetyl-alpha-D-glucosaminyl-(1-&gt;4)]-N-acetyl-alpha-D-muramoyl-L-alanyl-D-glutamyl-meso-2,6-diaminopimeloyl-D-alanyl-D-alanine + UDP + H(+). It functions in the pathway cell wall biogenesis; peptidoglycan biosynthesis. In terms of biological role, cell wall formation. Catalyzes the transfer of a GlcNAc subunit on undecaprenyl-pyrophosphoryl-MurNAc-pentapeptide (lipid intermediate I) to form undecaprenyl-pyrophosphoryl-MurNAc-(pentapeptide)GlcNAc (lipid intermediate II). The protein is UDP-N-acetylglucosamine--N-acetylmuramyl-(pentapeptide) pyrophosphoryl-undecaprenol N-acetylglucosamine transferase of Bifidobacterium adolescentis (strain ATCC 15703 / DSM 20083 / NCTC 11814 / E194a).